We begin with the raw amino-acid sequence, 476 residues long: FAD-dependent monooxygenase dpasE (476 aa).

The signal sequence occupies residues 1–21 (MSQPAFKIIIVGCSVTGLTLA). FAD is bound by residues Glu35, Ala49, and Arg109. 2 N-linked (GlcNAc...) asparagine glycosylation sites follow: Asn190 and Asn219. FAD is bound by residues Asp308 and Ala321. A helical membrane pass occupies residues 441–461 (GAGFWITAFLSLSLLAVAATM).

It belongs to the paxM FAD-dependent monooxygenase family. FAD serves as cofactor.

It is found in the membrane. It functions in the pathway secondary metabolite biosynthesis; terpenoid biosynthesis. Functionally, FAD-dependent monooxygenase; part of the gene cluster that mediates the biosynthesis of the diterpenoid pyrones subglutinols A and B. The first step of the pathway is the synthesis of the alpha-pyrone moiety by the polyketide synthase dpasA via condensation of one acetyl-CoA starter unit with 3 malonyl-CoA units and 2 methylations. The alpha-pyrone is then combined with geranylgeranyl pyrophosphate (GGPP) formed by the GGPP synthase dpasD through the action of the prenyltransferase dpasC to yield a linear alpha-pyrone diterpenoid. Subsequent steps in the diterpenoid pyrone biosynthetic pathway involve the decalin core formation, which is initiated by the epoxidation of the C10-C11 olefin by the FAD-dependent oxidoreductase dpasE, and is followed by a cyclization cascade catalyzed by the terpene cyclase dpasB. The FAD-linked oxidoreductase dpasF is then involved in tetrahydrofuran (THF) ring formation at the C5 unit to complete the formation of subglutinols A and B. DpasF possesses also an additional catalytic ability of multi-step oxidations to generate a new DDP analog with an enone system at the C5 named FDDP A. The sequence is that of FAD-dependent monooxygenase dpasE from Apiospora sacchari (Arthrinium sacchari).